The chain runs to 212 residues: External core antigen (212 aa).

The first 19 residues, 1–19 (MQLFHLCLVISCSCPTVQA), serve as a signal peptide directing secretion. Positions 25-27 (GWL) are HBEAG. A disordered region spans residues 165-212 (NAPILSTLPETTVVRRRGRSPRRRTPSPRRRRSQSPRRRRSQSRESQC). Positions 178-205 (VRRRGRSPRRRTPSPRRRRSQSPRRRRS) are enriched in basic residues. Residues 184-190 (SPRRRTP) form a 1; half-length repeat. The interval 184–206 (SPRRRTPSPRRRRSQSPRRRRSQ) is 3 X 8 AA repeats of S-P-R-R-R-R-S-Q. The propeptide occupies 184 to 212 (SPRRRTPSPRRRRSQSPRRRRSQSRESQC). 2 consecutive repeat copies span residues 191-198 (SPRRRRSQ) and 199-206 (SPRRRRSQ).

It belongs to the orthohepadnavirus precore antigen family. As to quaternary structure, homodimerizes. Phosphorylated. In terms of processing, cleaved by host furin.

It localises to the secreted. It is found in the host nucleus. In terms of biological role, may regulate immune response to the intracellular capsid in acting as a T-cell tolerogen, by having an immunoregulatory effect which prevents destruction of infected cells by cytotoxic T-cells. This immune regulation may predispose to chronicity during perinatal infections and prevent severe liver injury during adult infections. The chain is External core antigen from Hepatitis B virus genotype B1 subtype adw (isolate Japan/pJDW233/1988) (HBV-B).